We begin with the raw amino-acid sequence, 453 residues long: MSEKEIWEKVLKIAQEKLSAVSYSTFLKDTELYTIKDGEAIVLSSIPFNANWLNQQYAEIIQAILFDVVGYEVKPHFITTEELANYSNNETATPKETTKPSTETTEDNHVLGREQFNAHNTFDTFVIGPGNRFPHAASLAVAEAPAKAYNPLFIYGGVGLGKTHLMHAIGHHVLDNNPDAKVIYTSSEKFTNEFIKSIRDNEGEAFRERYRNIDVLLIDDIQFIQNKVQTQEEFFYTFNELHQNNKQIVISSDRPPKEIAQLEDRLRSRFEWGLIVDITPPDYETRMAILQKKIEEEKLDIPPEALNYIANQIQSNIRELEGALTRLLAYSQLLGKPITTELTAEALKDIIQAPKSKKITIQDIQKIVGQYYNVRIEDFSAKKRTKSIAYPRQIAMYLSRELTDFSLPKIGEEFGGRDHTTVIHAHEKISKDLKEDPIFKQEVENLEKEIRNV.

The tract at residues 1–71 (MSEKEIWEKV…QAILFDVVGY (71 aa)) is domain I, interacts with DnaA modulators. A domain II region spans residues 71-114 (YEVKPHFITTEELANYSNNETATPKETTKPSTETTEDNHVLGRE). The segment at 115–331 (QFNAHNTFDT…GALTRLLAYS (217 aa)) is domain III, AAA+ region. ATP-binding residues include G159, G161, K162, and T163. The domain IV, binds dsDNA stretch occupies residues 332–453 (QLLGKPITTE…ENLEKEIRNV (122 aa)).

This sequence belongs to the DnaA family. In terms of assembly, oligomerizes as a right-handed, spiral filament on DNA at oriC.

Its subcellular location is the cytoplasm. Plays an essential role in the initiation and regulation of chromosomal replication. ATP-DnaA binds to the origin of replication (oriC) to initiate formation of the DNA replication initiation complex once per cell cycle. Binds the DnaA box (a 9 base pair repeat at the origin) and separates the double-stranded (ds)DNA. Forms a right-handed helical filament on oriC DNA; dsDNA binds to the exterior of the filament while single-stranded (ss)DNA is stabiized in the filament's interior. The ATP-DnaA-oriC complex binds and stabilizes one strand of the AT-rich DNA unwinding element (DUE), permitting loading of DNA polymerase. After initiation quickly degrades to an ADP-DnaA complex that is not apt for DNA replication. Binds acidic phospholipids. This is Chromosomal replication initiator protein DnaA from Staphylococcus aureus (strain bovine RF122 / ET3-1).